Reading from the N-terminus, the 512-residue chain is Na(+)/H(+) antiporter NhaB (512 aa).

11 helical membrane-spanning segments follow: residues 28-48, 52-72, 97-117, 144-164, 201-221, 237-257, 296-330, 347-367, 390-410, 446-466, and 474-494; these read FLII…WLLV, IFTL…LLAI, LLLM…LFIF, FLDA…FYGI, LMMH…VGEP, FFLR…LTCF, LALI…IILA, TEAL…AVII, LFYL…VGSV, ATPN…APLI, and VWMA…CVKF.

Belongs to the NhaB Na(+)/H(+) (TC 2.A.34) antiporter family.

It localises to the cell inner membrane. It carries out the reaction 2 Na(+)(in) + 3 H(+)(out) = 2 Na(+)(out) + 3 H(+)(in). In terms of biological role, na(+)/H(+) antiporter that extrudes sodium in exchange for external protons. The sequence is that of Na(+)/H(+) antiporter NhaB from Enterobacter sp. (strain 638).